Consider the following 295-residue polypeptide: Nucleotide-binding protein Sare_3328 (295 aa).

19–26 (GVSGGGRS) contacts ATP. 70 to 73 (DVRS) provides a ligand contact to GTP.

The protein belongs to the RapZ-like family.

Displays ATPase and GTPase activities. The sequence is that of Nucleotide-binding protein Sare_3328 from Salinispora arenicola (strain CNS-205).